We begin with the raw amino-acid sequence, 235 residues long: Ribosomal RNA large subunit methyltransferase E (235 aa).

S-adenosyl-L-methionine-binding residues include Gly-76, Trp-78, Asp-99, Asp-115, and Asp-139. Catalysis depends on Lys-179, which acts as the Proton acceptor.

This sequence belongs to the class I-like SAM-binding methyltransferase superfamily. RNA methyltransferase RlmE family.

The protein localises to the cytoplasm. The catalysed reaction is uridine(2552) in 23S rRNA + S-adenosyl-L-methionine = 2'-O-methyluridine(2552) in 23S rRNA + S-adenosyl-L-homocysteine + H(+). Its function is as follows. Specifically methylates the uridine in position 2552 of 23S rRNA at the 2'-O position of the ribose in the fully assembled 50S ribosomal subunit. This is Ribosomal RNA large subunit methyltransferase E from Rhodopseudomonas palustris (strain BisB5).